The chain runs to 306 residues: uncharacterized protein (306 aa).

A disordered region spans residues 40–156; the sequence is HETCSTPGED…AVASASAPTE (117 aa). Residues 64-73 show a composition bias toward low complexity; that stretch reads EGINLGEEGL. A compositionally biased stretch (basic residues) spans 129-139; sequence KQHKKAKKRKS.

This is an uncharacterized protein from Rattus norvegicus (Rat).